We begin with the raw amino-acid sequence, 287 residues long: ATP synthase gamma chain (287 aa).

It belongs to the ATPase gamma chain family. F-type ATPases have 2 components, CF(1) - the catalytic core - and CF(0) - the membrane proton channel. CF(1) has five subunits: alpha(3), beta(3), gamma(1), delta(1), epsilon(1). CF(0) has three main subunits: a, b and c.

It localises to the cell membrane. In terms of biological role, produces ATP from ADP in the presence of a proton gradient across the membrane. The gamma chain is believed to be important in regulating ATPase activity and the flow of protons through the CF(0) complex. This is ATP synthase gamma chain from Mycoplasmopsis agalactiae (strain NCTC 10123 / CIP 59.7 / PG2) (Mycoplasma agalactiae).